Here is a 178-residue protein sequence, read N- to C-terminus: ATP synthase subunit delta (178 aa).

It belongs to the ATPase delta chain family. As to quaternary structure, F-type ATPases have 2 components, F(1) - the catalytic core - and F(0) - the membrane proton channel. F(1) has five subunits: alpha(3), beta(3), gamma(1), delta(1), epsilon(1). F(0) has three main subunits: a(1), b(2) and c(10-14). The alpha and beta chains form an alternating ring which encloses part of the gamma chain. F(1) is attached to F(0) by a central stalk formed by the gamma and epsilon chains, while a peripheral stalk is formed by the delta and b chains.

Its subcellular location is the cell inner membrane. In terms of biological role, f(1)F(0) ATP synthase produces ATP from ADP in the presence of a proton or sodium gradient. F-type ATPases consist of two structural domains, F(1) containing the extramembraneous catalytic core and F(0) containing the membrane proton channel, linked together by a central stalk and a peripheral stalk. During catalysis, ATP synthesis in the catalytic domain of F(1) is coupled via a rotary mechanism of the central stalk subunits to proton translocation. Functionally, this protein is part of the stalk that links CF(0) to CF(1). It either transmits conformational changes from CF(0) to CF(1) or is implicated in proton conduction. The protein is ATP synthase subunit delta of Thioalkalivibrio sulfidiphilus (strain HL-EbGR7).